The primary structure comprises 1093 residues: Leucine-rich repeats and immunoglobulin-like domains protein 1 (1093 aa).

The N-terminal stretch at 1–34 (MARPVRGGLGAPRRSPCLLLLWLLLLRLEPVTAA) is a signal peptide. Residues 35–68 (AGPRAPCAAACTCAGDSLDCGGRGLAALPGDLPS) enclose the LRRNT domain. Residues 35–794 (AGPRAPCAAA…GCRKDGTTVG (760 aa)) lie on the Extracellular side of the membrane. An intrachain disulfide couples Cys-45 to Cys-54. LRR repeat units lie at residues 69 to 90 (WTRS…GFED), 93 to 114 (NLQE…GAAS), 116 to 137 (HVVS…QLKA), 140 to 161 (SLEV…CFPH), 164 to 185 (PIKE…AFDG), 189 to 210 (SLLT…AFKL), 212 to 233 (RLTQ…TFQG), 236 to 257 (SLEV…AFWG), 260 to 281 (KMHV…SLYG), 284 to 305 (ALHQ…GWSF), 308 to 329 (KLHE…SLAE), 332 to 353 (SLSV…AFKG), 356 to 378 (SLRV…SGAF), 383 to 404 (SLSK…AFSG), and 407 to 428 (GLEH…AFVK). Asn-74 carries an N-linked (GlcNAc...) asparagine glycan. Asn-150 carries an N-linked (GlcNAc...) asparagine glycan. N-linked (GlcNAc...) asparagine glycosylation is present at Asn-246. N-linked (GlcNAc...) asparagine glycans are attached at residues Asn-292 and Asn-318. One can recognise an LRRCT domain in the interval 440–491 (DSFLCDCQLKWLPPWLIGRMLQAFVTATCAHPESLKGQSIFSVPPESFVCDD). 4 cysteine pairs are disulfide-bonded: Cys-444–Cys-468, Cys-446–Cys-489, Cys-516–Cys-577, and Cys-620–Cys-672. Ig-like C2-type domains follow at residues 495-594 (PQII…ARLT), 599-688 (PSFT…ATLT), and 693-779 (PSLV…SQLS). Residue Asn-684 is glycosylated (N-linked (GlcNAc...) asparagine). A disulfide bond links Cys-714 and Cys-763. Residues 795 to 815 (IFTIAVVSSIVLTSLVWVCII) traverse the membrane as a helical segment. Residues 816 to 1093 (YQTRKKSEEY…RVPLLLAPKS (278 aa)) lie on the Cytoplasmic side of the membrane. Disordered regions lie at residues 946 to 983 (AFHP…CSRT) and 1063 to 1093 (PKAC…APKS).

In terms of assembly, interacts (via extracellular LRR and Ig-like domains) with EGFR/ERBB1, ERBB2, ERBB3 and ERBB4 (via extracellular domain). The physiological relevance of the interaction is controversial; LRIG1 may have low affinity for EGFR, and interaction may occur only when high levels of both proteins are present. As to expression, widely expressed.

The protein resides in the cell membrane. Its function is as follows. Acts as a feedback negative regulator of signaling by receptor tyrosine kinases, through a mechanism that involves enhancement of receptor ubiquitination and accelerated intracellular degradation. The chain is Leucine-rich repeats and immunoglobulin-like domains protein 1 from Homo sapiens (Human).